The sequence spans 199 residues: MIAFLKGAVFERRPDSIIIDVNGVGYEVNIHSRLFPRLPQRGEPILIHTFLQVLENEFKLFGFLDQDELRLFKTLLTVSGIGSKGALAVLSTMEPLVFYRAIASQDEKTLVRIPGVGKKTAQRMIFELQDKVPELKLVEVEKEQRPLLDELMEALEILGYSRSEVLPAIMDLNRNKQLGNIVEENIKLVLKAKAQEMRR.

A domain I region spans residues 1 to 64 (MIAFLKGAVF…ENEFKLFGFL (64 aa)). The domain II stretch occupies residues 65-143 (DQDELRLFKT…ELKLVEVEKE (79 aa)). The segment at 144 to 148 (QRPLL) is flexible linker. The domain III stretch occupies residues 148–199 (LDELMEALEILGYSRSEVLPAIMDLNRNKQLGNIVEENIKLVLKAKAQEMRR).

The protein belongs to the RuvA family. Homotetramer. Forms an RuvA(8)-RuvB(12)-Holliday junction (HJ) complex. HJ DNA is sandwiched between 2 RuvA tetramers; dsDNA enters through RuvA and exits via RuvB. An RuvB hexamer assembles on each DNA strand where it exits the tetramer. Each RuvB hexamer is contacted by two RuvA subunits (via domain III) on 2 adjacent RuvB subunits; this complex drives branch migration. In the full resolvosome a probable DNA-RuvA(4)-RuvB(12)-RuvC(2) complex forms which resolves the HJ.

Its subcellular location is the cytoplasm. The RuvA-RuvB-RuvC complex processes Holliday junction (HJ) DNA during genetic recombination and DNA repair, while the RuvA-RuvB complex plays an important role in the rescue of blocked DNA replication forks via replication fork reversal (RFR). RuvA specifically binds to HJ cruciform DNA, conferring on it an open structure. The RuvB hexamer acts as an ATP-dependent pump, pulling dsDNA into and through the RuvAB complex. HJ branch migration allows RuvC to scan DNA until it finds its consensus sequence, where it cleaves and resolves the cruciform DNA. The sequence is that of Holliday junction branch migration complex subunit RuvA from Syntrophomonas wolfei subsp. wolfei (strain DSM 2245B / Goettingen).